A 778-amino-acid polypeptide reads, in one-letter code: MLSARSAIKRPIVRGLATVSNLTRDSKVNQNLLEDHSFINYKQNVETLDIVRKRLNRPFTYAEKILYGHLDDPHGQDIQRGVSYLKLRPDRVACQDATAQMAILQFMSAGLPQVAKPVTVHCDHLIQAQVGGEKDLKRAIDLNKEVYDFLASATAKYNMGFWKPGSGIIHQIVLENYAFPGALIIGTDSHTPNAGGLGQLAIGVGGADAVDVMAGRPWELKAPKILGVKLTGKMNGWTSPKDIILKLAGITTVKGGTGKIVEYFGDGVDTFSATGMGTICNMGAEIGATTSVFPFNKSMIEYLEATGRGKIADFAKLYHKDLLSADKDAEYDEVVEIDLNTLEPYINGPFTPDLATPVSKMKEVAVANNWPLDVRVGLIGSCTNSSYEDMSRSASIVKDAAAHGLKSKTIFTVTPGSEQIRATIERDGQLETFKEFGGIVLANACGPCIGQWDRRDIKKGDKNTIVSSYNRNFTSRNDGNPQTHAFVASPELVTAFAIAGDLRFNPLTDKLKDKDGNEFMLKPPHGDGLPQRGYDAGENTYQAPPADRSTVEVKVSPTSDRLQLLKPFKPWDGKDAKDMPILIKAVGKTTTDHISMAGPWLKYRGHLENISNNYMIGAINAENKKANCVKNVYTGEYKGVPDTARDYRDQGIKWVVIGDENFGEGSSREHAALEPRFLGGFAIITKSFARIHETNLKKQGLLPLNFKNPADYDKINPDDRIDILGLAELAPGKPVTMRVHPKNGKPWDAVLTHTFNDEQIEWFKYGSALNKIKADEKK.

The N-terminal 16 residues, 1–16 (MLSARSAIKRPIVRGL), are a transit peptide targeting the mitochondrion. Substrate contacts are provided by residues glutamine 95 and 188–190 (DSH). [4Fe-4S] cluster is bound at residue cysteine 382. Position 391 is a phosphoserine (serine 391). Phosphothreonine is present on threonine 409. 2 residues coordinate [4Fe-4S] cluster: cysteine 445 and cysteine 448. Positions 471 and 476 each coordinate substrate. Residue serine 556 is modified to Phosphoserine. Substrate is bound by residues arginine 604 and 667-668 (SR).

It belongs to the aconitase/IPM isomerase family. Monomer. Binds to mitochondrial DNA (mtDNA) and identified as component of mitochondrial nucleoids. Requires [4Fe-4S] cluster as cofactor.

Its subcellular location is the mitochondrion. The protein resides in the cytoplasm. The enzyme catalyses citrate = D-threo-isocitrate. The protein operates within carbohydrate metabolism; tricarboxylic acid cycle; isocitrate from oxaloacetate: step 2/2. Subject to catabolite regulation. Functionally, catalyzes the isomerization of citrate to isocitrate via cis-aconitate, a step in the citric acid cycle. Can also provide minor contributions to the reversible dehydration of (R)-homocitrate to cis-homoaconitate, a step in the alpha-aminoadipate pathway for lysine biosynthesis. Also plays an essential role in mtDNA maintenance. May directly protect mtDNA from accumulation of point mutations and ssDNA breaks as a component of mitochondrial nucleoids, or by preventing accumulation of iron citrate thereby alleviating its detrimental effects in mitochondria. The polypeptide is Aconitate hydratase, mitochondrial (Saccharomyces cerevisiae (strain ATCC 204508 / S288c) (Baker's yeast)).